The following is a 543-amino-acid chain: Type I restriction enzyme MpnII methylase subunit (543 aa).

S-adenosyl-L-methionine contacts are provided by residues 208 to 213 (EFFTPQ), 240 to 242 (SGS), and Glu265.

The protein belongs to the N(4)/N(6)-methyltransferase family. In terms of assembly, the methyltransferase is composed of M and S polypeptides.

The enzyme catalyses a 2'-deoxyadenosine in DNA + S-adenosyl-L-methionine = an N(6)-methyl-2'-deoxyadenosine in DNA + S-adenosyl-L-homocysteine + H(+). Its function is as follows. The subtype gamma methyltransferase (M) subunit of a type I restriction enzyme. The M and S subunits together form a methyltransferase (MTase) that probably methylates A-2 on the top strand and A-3 on the bottom strand of the sequence 5'-GAN(7)TAY-3'. As the bacterial DNA is methylated on this sequence and this is the only type I methylase in the genome, it is probably responsible for all of the methylation on this site in the genome. The R subunit has multiple frameshifts and is probably not expressed in this bacteria. This Mycoplasma pneumoniae (strain ATCC 29342 / M129 / Subtype 1) (Mycoplasmoides pneumoniae) protein is Type I restriction enzyme MpnII methylase subunit.